Consider the following 140-residue polypeptide: Alkaline proteinase inhibitor (140 aa).

The signal sequence occupies residues 1-25 (MPSSVQATAGLLATLMMFCGEVAMA).

Belongs to the protease inhibitor I38 family.

The protein localises to the periplasm. Its function is as follows. Inhibitor of the alkaline protease. This chain is Alkaline proteinase inhibitor (inh), found in Pseudomonas brassicacearum (strain NFM421).